Consider the following 487-residue polypeptide: Serine carboxypeptidase-like 38 (487 aa).

An N-terminal signal peptide occupies residues 1–20; the sequence is MGKQQDWSVTACIFLSLSLA. Disulfide bonds link cysteine 119–cysteine 368, cysteine 280–cysteine 290, and cysteine 315–cysteine 336. Serine 215 is an active-site residue. N-linked (GlcNAc...) asparagine glycosylation is present at asparagine 233. 2 N-linked (GlcNAc...) asparagine glycosylation sites follow: asparagine 317 and asparagine 357. Aspartate 407 is an active-site residue. N-linked (GlcNAc...) asparagine glycans are attached at residues asparagine 423 and asparagine 449. The active site involves histidine 460.

It belongs to the peptidase S10 family. Expressed in seedlings, roots, leaves, flowers and siliques.

It localises to the secreted. In terms of biological role, probable carboxypeptidase. The polypeptide is Serine carboxypeptidase-like 38 (SCPL38) (Arabidopsis thaliana (Mouse-ear cress)).